A 353-amino-acid polypeptide reads, in one-letter code: COMPASS component SPP1 (353 aa).

The PHD-type zinc finger occupies 22–72 (DVYCICKRPDYGELMVGCDGCDDWFHFTCLHIPEQFKDLVFSFYCPYCQAG). Cys-25, Cys-27, Cys-39, Cys-42, His-47, Cys-50, Cys-66, and Cys-69 together coordinate Zn(2+). The tract at residues 83–124 (NGEGSLPKTLWKRKCRISDCYKPCLQDSKYCSEEHGREFVND) is non coventional C3H-type zinc finger. At Ser-87 the chain carries Phosphoserine. 4 residues coordinate Zn(2+): Cys-97, Cys-102, Cys-113, and His-117. Residues 235-244 (VECGKEDSKG) show a composition bias toward basic and acidic residues. Residues 235–255 (VECGKEDSKGTKRKKKKNSSR) form a disordered region. A compositionally biased stretch (basic residues) spans 245-255 (TKRKKKKNSSR).

As to quaternary structure, component of the Set1C/COMPASS complex which consists of SET1(2), BRE2(2), SPP1(2), SDC1(1), SHG1(1), SWD1(1), SWD2(1), and SWD3(1).

Its subcellular location is the nucleus. In terms of biological role, component of the Set1C/COMPASS complex that specifically mono-, di- and trimethylates histone H3 to form H3K4me1/2/3, which subsequently plays a role in telomere length maintenance and transcription elongation regulation. COMPASS recognizes ubiquitinated H2B on one face of the nucleosome which stimulates the methylation of H3 on the opposing face. SPP1/CPS40 can recognize methylated histone lysine residue H3K4me3 or unmethylated H3K4. Stimulates the RNA binding activity of SET1. This Saccharomyces cerevisiae (strain ATCC 204508 / S288c) (Baker's yeast) protein is COMPASS component SPP1.